Consider the following 359-residue polypeptide: Cytoplasmic tRNA 2-thiolation protein 1 (359 aa).

The protein belongs to the TtcA family. CTU1/NCS6/ATPBD3 subfamily. As to quaternary structure, interacts with NCS2 and URM1. May act by forming a heterodimer with NCS2. Component of a large molecular weight complex of more than 250 kDa.

The protein resides in the cytoplasm. The protein localises to the mitochondrion. It participates in tRNA modification; 5-methoxycarbonylmethyl-2-thiouridine-tRNA biosynthesis. Plays a central role in 2-thiolation of mcm(5)S(2)U at tRNA wobble positions of tRNA(Lys), tRNA(Glu) and tRNA(Gln). Directly binds tRNAs and probably acts by catalyzing adenylation of tRNAs, an intermediate required for 2-thiolation. It is unclear whether it acts as a sulfurtransferase that transfers sulfur from thiocarboxylated URM1 onto the uridine of tRNAs at wobble position. Prior mcm(5) tRNA modification by the elongator complex is required for 2-thiolation. May also be involved in protein urmylation. May also be involved in protein urmylation and in invasive and pseudohyphal growth. The polypeptide is Cytoplasmic tRNA 2-thiolation protein 1 (Saccharomyces cerevisiae (strain ATCC 204508 / S288c) (Baker's yeast)).